A 206-amino-acid chain; its full sequence is Ras-related protein Rab7 (206 aa).

Residues 15–22 (GDTGVGKT), 63–67 (DTAGQ), and 125–128 (NKID) each bind GTP. 2 S-geranylgeranyl cysteine lipidation sites follow: C204 and C206. A Cysteine methyl ester modification is found at C206.

It belongs to the small GTPase superfamily. Rab family.

It is found in the cell membrane. Its function is as follows. Protein transport. Probably involved in vesicular traffic. This chain is Ras-related protein Rab7, found in Vigna aconitifolia (Moth bean).